Consider the following 260-residue polypeptide: DNA repair protein RecO (260 aa).

It belongs to the RecO family.

Involved in DNA repair and RecF pathway recombination. The protein is DNA repair protein RecO of Streptococcus gordonii (strain Challis / ATCC 35105 / BCRC 15272 / CH1 / DL1 / V288).